An 899-amino-acid polypeptide reads, in one-letter code: Suppressor of glycerol defect protein 1 (899 aa).

Over residues 24–33 (QDERFSISEG) the composition is skewed to basic and acidic residues. Disordered stretches follow at residues 24–181 (QDER…VSYP) and 248–326 (ETNS…DDSE). Basic residues predominate over residues 34–49 (KKRRRGNGKHLSRKEK). The span at 65 to 77 (REINSSRLKSAPT) shows a compositional bias: polar residues. A compositionally biased stretch (acidic residues) spans 103 to 126 (DESESNENWDSDEVLTDEVAEESG). 3 stretches are compositionally biased toward basic and acidic residues: residues 134-143 (ETMKKLESLK), 162-174 (SYEK…RDTN), and 251-264 (SMRK…KAFS). The span at 265–292 (SDDDLSASDFEDSDGLSESDNDSVADSD) shows a compositional bias: acidic residues. The MIF4G domain occupies 335 to 540 (SKKVNSSLNK…DTMSDLKNNR (206 aa)). One can recognise an MI domain in the interval 644-781 (DIRRAIFISI…KLDVFKHVPF (138 aa)). A Phosphoserine modification is found at Ser-736.

This sequence belongs to the CWC22 family. As to quaternary structure, interacts with PLC1.

It is found in the nucleus. The protein localises to the nucleolus. Functionally, involved in osmoregulatory glycerol response, probably through its interaction with PLC1 which regulates the expression of GDP1. This is Suppressor of glycerol defect protein 1 (SGD1) from Saccharomyces cerevisiae (strain ATCC 204508 / S288c) (Baker's yeast).